Consider the following 576-residue polypeptide: Interleukin-1 receptor type 1 (576 aa).

Residues 1–19 form the signal peptide; sequence MENMKVLLGLICLMVPLLS. Topologically, residues 20 to 338 are extracellular; the sequence is LEIDVCTEYP…QLIYPVPDFK (319 aa). Disulfide bonds link Cys25–Cys107, Cys46–Cys99, and Cys145–Cys199. Ig-like C2-type domains follow at residues 25-115, 121-213, and 229-329; these read CTEY…VTVT, PGLC…YPVT, and PVIL…AHVQ. N-linked (GlcNAc...) asparagine glycosylation is found at Asn63, Asn103, Asn174, Asn236, Asn252, Asn266, and Asn300. Residues Cys251 and Cys315 are joined by a disulfide bond. Residues 339–359 form a helical membrane-spanning segment; that stretch reads NYLIGGFIILTATIVCCVCIY. The Cytoplasmic portion of the chain corresponds to 360-576; the sequence is KVFKVDIVLW…LPAATHLPLG (217 aa). Residues 386 to 541 enclose the TIR domain; that stretch reads KTYDAYILYP…RFWKNLRYQM (156 aa). Residue Glu473 is part of the active site. Tyr499 bears the Phosphotyrosine mark. Thr556 carries the post-translational modification Phosphothreonine; by PKC.

This sequence belongs to the interleukin-1 receptor family. As to quaternary structure, the interleukin-1 receptor complex is a heterodimer of IL1R1 and IL1RAP. Interacts with PIK3R1. Interacts with IL1A. In terms of processing, a soluble form (sIL1R1) is probably produced by proteolytic cleavage at the cell surface (shedding). Rapidly phosphorylated on Tyr-499 in response to IL-1, which creates a SH2 binding site for the PI 3-kinase regulatory subunit PIK3R1. Isoform 2 is expressed in various brain tissues.

The protein resides in the membrane. Its subcellular location is the cell membrane. The protein localises to the secreted. It carries out the reaction NAD(+) + H2O = ADP-D-ribose + nicotinamide + H(+). Its function is as follows. Receptor for IL1A, IL1B and IL1RN. After binding to interleukin-1 associates with the coreceptor IL1RAP to form the high affinity interleukin-1 receptor complex which mediates interleukin-1-dependent activation of NF-kappa-B, MAPK and other pathways. Signaling involves the recruitment of adapter molecules such as TOLLIP, MYD88, and IRAK1 or IRAK2 via the respective TIR domains of the receptor/coreceptor subunits. Binds ligands with comparable affinity and binding of antagonist IL1RN prevents association with IL1RAP to form a signaling complex. Involved in IL1B-mediated costimulation of IFNG production from T-helper 1 (Th1) cells. In terms of biological role, unable to mediate canonical IL-1 signaling. Cooperates with IL1RAP isoform 3 to mediate IL1B-induced neuronal activity including IL1B-potentiated NMDA-induced calcium influx mediated by Akt kinase activation. The sequence is that of Interleukin-1 receptor type 1 (Il1r1) from Mus musculus (Mouse).